The chain runs to 189 residues: uncharacterized protein (189 aa).

The HTH tetR-type domain occupies Arg2 to Arg62. The segment at residues Thr25–Phe44 is a DNA-binding region (H-T-H motif).

This is an uncharacterized protein from Bacillus subtilis (strain 168).